Reading from the N-terminus, the 528-residue chain is Phosphoenolpyruvate carboxykinase (ATP) (528 aa).

Positions 56, 192, and 198 each coordinate substrate. ATP-binding positions include lysine 198, histidine 217, and 233–241; that span reads GLSGTGKTT. Residues lysine 198 and histidine 217 each coordinate Mn(2+). Aspartate 254 lines the Mn(2+) pocket. Glutamate 282, arginine 319, and threonine 444 together coordinate ATP. A substrate-binding site is contributed by arginine 319.

Belongs to the phosphoenolpyruvate carboxykinase (ATP) family. It depends on Mn(2+) as a cofactor.

The protein resides in the cytoplasm. The catalysed reaction is oxaloacetate + ATP = phosphoenolpyruvate + ADP + CO2. Its pathway is carbohydrate biosynthesis; gluconeogenesis. Its function is as follows. Involved in the gluconeogenesis. Catalyzes the conversion of oxaloacetate (OAA) to phosphoenolpyruvate (PEP) through direct phosphoryl transfer between the nucleoside triphosphate and OAA. In Bacillus pumilus (strain SAFR-032), this protein is Phosphoenolpyruvate carboxykinase (ATP).